Consider the following 465-residue polypeptide: Na(+)-translocating NADH-quinone reductase subunit A (465 aa).

The protein belongs to the NqrA family. As to quaternary structure, composed of six subunits; NqrA, NqrB, NqrC, NqrD, NqrE and NqrF.

The catalysed reaction is a ubiquinone + n Na(+)(in) + NADH + H(+) = a ubiquinol + n Na(+)(out) + NAD(+). In terms of biological role, NQR complex catalyzes the reduction of ubiquinone-1 to ubiquinol by two successive reactions, coupled with the transport of Na(+) ions from the cytoplasm to the periplasm. NqrA to NqrE are probably involved in the second step, the conversion of ubisemiquinone to ubiquinol. The polypeptide is Na(+)-translocating NADH-quinone reductase subunit A (Chlamydia trachomatis serovar L2 (strain ATCC VR-902B / DSM 19102 / 434/Bu)).